The sequence spans 113 residues: ATP-dependent Clp protease adapter protein ClpS (113 aa).

The disordered stretch occupies residues 1–24 (MTAQLHMMSDKHDQDNDASVLLQT).

Belongs to the ClpS family. In terms of assembly, binds to the N-terminal domain of the chaperone ClpA.

In terms of biological role, involved in the modulation of the specificity of the ClpAP-mediated ATP-dependent protein degradation. This Ruegeria pomeroyi (strain ATCC 700808 / DSM 15171 / DSS-3) (Silicibacter pomeroyi) protein is ATP-dependent Clp protease adapter protein ClpS.